The sequence spans 99 residues: Large ribosomal subunit protein bL27 (99 aa).

Residues 13–65 form a disordered region; it reads AHHKGGGSTTNGRNSAGRRLGAKRADGQEVHAGSIIYRQRGTKIHPGKNVGRG.

Belongs to the bacterial ribosomal protein bL27 family.

This Lactobacillus delbrueckii subsp. bulgaricus (strain ATCC BAA-365 / Lb-18) protein is Large ribosomal subunit protein bL27.